Reading from the N-terminus, the 314-residue chain is Olfactory receptor 52K1 (314 aa).

The Extracellular segment spans residues 1-27 (MLPSNITSTHPAVFLLVGIPGLEHLHA). N5 is a glycosylation site (N-linked (GlcNAc...) asparagine). Residues 28 to 48 (WISIPFCFAYTLALLGNCTLL) form a helical membrane-spanning segment. The Cytoplasmic segment spans residues 49–56 (FIIQADAA). Residues 57-77 (LHEPMYLFLAMLATIDLVLSS) form a helical membrane-spanning segment. Over 78–101 (TTLPKMLAIFWFRDQEINFFACLV) the chain is Extracellular. A disulfide bridge links C99 with C191. A helical transmembrane segment spans residues 102–122 (QMFFLHSFSIMESAVLLAMAF). Residues 123-141 (DRYVAICKPLHYTTVLTGS) lie on the Cytoplasmic side of the membrane. The helical transmembrane segment at 142–162 (LITKIGMAAVARAVTLMTPLP) threads the bilayer. Topologically, residues 163–198 (FLLRRFHYCRGPVIAHCYCEHMAVVRLACGDTSFNN) are extracellular. Residues 199 to 219 (IYGIAVAMFIVVLDLLFVILS) traverse the membrane as a helical segment. The Cytoplasmic portion of the chain corresponds to 220–239 (YVFILQAVLQLASQEARYKA). A helical membrane pass occupies residues 240–260 (FGTCVSHIGAILSTYTPVVIS). Topologically, residues 261 to 275 (SVMHRVARHAAPRVH) are extracellular. Residues 276-296 (ILLAIFYLLFPPMVNPIIYGV) traverse the membrane as a helical segment. The Cytoplasmic portion of the chain corresponds to 297-314 (KTKQIREYVLSLFQRKNM).

It belongs to the G-protein coupled receptor 1 family.

It is found in the cell membrane. Odorant receptor. This chain is Olfactory receptor 52K1 (OR52K1), found in Homo sapiens (Human).